Reading from the N-terminus, the 79-residue chain is UPF0180 protein BcerKBAB4_1316 (79 aa).

The protein belongs to the UPF0180 family.

This chain is UPF0180 protein BcerKBAB4_1316, found in Bacillus mycoides (strain KBAB4) (Bacillus weihenstephanensis).